A 468-amino-acid chain; its full sequence is Homocitrate synthase (468 aa).

The 256-residue stretch at 11–266 folds into the Pyruvate carboxyltransferase domain; the sequence is VGILDSTLRE…IEVVDLKKLS (256 aa). R19 serves as a coordination point for 2-oxoglutarate. Residue E20 participates in Mg(2+) binding. 3 residues coordinate 2-oxoglutarate: H83, R143, and T177. Positions 205 and 207 each coordinate Mg(2+). H299 functions as the Proton acceptor in the catalytic mechanism.

Belongs to the alpha-IPM synthase/homocitrate synthase family. Homocitrate synthase LYS20/LYS21 subfamily. The cofactor is Mg(2+). It depends on Mn(2+) as a cofactor.

It catalyses the reaction acetyl-CoA + 2-oxoglutarate + H2O = (2R)-homocitrate + CoA + H(+). Its pathway is amino-acid biosynthesis; L-lysine biosynthesis via AAA pathway; L-alpha-aminoadipate from 2-oxoglutarate: step 1/5. With respect to regulation, inhibited by lysine. Catalyzes the aldol-type condensation of 2-oxoglutarate with acetyl-CoA to yield homocitrate. Carries out the first step of the alpha-aminoadipate (AAA) lysine biosynthesis pathway. Does not display 2-isopropylmalate synthase and citramalate synthase activities since it cannot use 2-oxoisovalerate or pyruvate as substrate. In Sulfolobus acidocaldarius (strain ATCC 33909 / DSM 639 / JCM 8929 / NBRC 15157 / NCIMB 11770), this protein is Homocitrate synthase.